We begin with the raw amino-acid sequence, 240 residues long: Ubiquinone biosynthesis O-methyltransferase (240 aa).

The S-adenosyl-L-methionine site is built by Arg-44, Gly-64, Asp-85, and Met-129.

The protein belongs to the methyltransferase superfamily. UbiG/COQ3 family.

The catalysed reaction is a 3-demethylubiquinol + S-adenosyl-L-methionine = a ubiquinol + S-adenosyl-L-homocysteine + H(+). It catalyses the reaction a 3-(all-trans-polyprenyl)benzene-1,2-diol + S-adenosyl-L-methionine = a 2-methoxy-6-(all-trans-polyprenyl)phenol + S-adenosyl-L-homocysteine + H(+). Its pathway is cofactor biosynthesis; ubiquinone biosynthesis. Functionally, O-methyltransferase that catalyzes the 2 O-methylation steps in the ubiquinone biosynthetic pathway. The polypeptide is Ubiquinone biosynthesis O-methyltransferase (Escherichia coli O81 (strain ED1a)).